A 418-amino-acid polypeptide reads, in one-letter code: Vacuole membrane protein HFL1 (418 aa).

Residues 1–5 (MENKL) are Extracellular-facing. The chain crosses the membrane as a helical span at residues 6 to 26 (LCWWLYWPCVYSSIIATIISF). Over 27 to 43 (YTITRHLLNYRKPYEQR) the chain is Cytoplasmic. The helical transmembrane segment at 44 to 64 (LSIRILLLVPIFSVSCASGII) threads the bilayer. Residues 65–78 (KPEAAQFYVDPIRE) lie on the Extracellular side of the membrane. A helical transmembrane segment spans residues 79–99 (FYEAFVIYTFFTFLTLLLGGE). Residues 100–141 (RNIITVLSLNHAPTRHPIPLIGKICKPIDLSDPFDFLFVKKG) lie on the Cytoplasmic side of the membrane. The chain crosses the membrane as a helical span at residues 142-162 (ILQYVWFKPFYCFGTLICSAW). Over 163–168 (KLPKFE) the chain is Extracellular. The helical transmembrane segment at 169 to 189 (IFLNVFYNISVTWSLYSLALF) threads the bilayer. Residues 190-205 (WKCLYPELTPYKPWLK) lie on the Cytoplasmic side of the membrane. A helical membrane pass occupies residues 206 to 226 (FLCVKLIIFASYWQSIIIQGL). The Extracellular segment spans residues 227 to 246 (VVTGKLGTGNQDRTSGYVYK). Residues 247 to 267 (NGLLCIEMVPFAILHAVAFPW) form a helical membrane-spanning segment. Residues 268-418 (NKYTAFSIPY…DVQSRSSMAC (151 aa)) are Cytoplasmic-facing. The tract at residues 379–402 (RTFPEDPNYPVVHDYTMGHRYSRS) is ATG8-interacting region.

Belongs to the TMEM184 family. As to quaternary structure, interacts with ATG8.

Its subcellular location is the vacuole membrane. Vacuole membrane protein that recruits ATG8 to facilitate the degradation of vacuolar integral membrane proteins during early-stationary vacuole turnover (EVT) when cells enter stationary phase. In Saccharomyces cerevisiae (strain ATCC 204508 / S288c) (Baker's yeast), this protein is Vacuole membrane protein HFL1.